The following is a 308-amino-acid chain: Probable GTP 3',8-cyclase (308 aa).

Positions 4-224 (RFGRPLEDLR…QIRKKHFRPR (221 aa)) constitute a Radical SAM core domain. Position 13 (R13) interacts with GTP. [4Fe-4S] cluster contacts are provided by C20, C24, and C27. Residue K60 coordinates GTP. G64 lines the S-adenosyl-L-methionine pocket. T90 provides a ligand contact to GTP. S114 is an S-adenosyl-L-methionine binding site. K151 is a GTP binding site. The [4Fe-4S] cluster site is built by C245 and C248. 250 to 252 (RIR) provides a ligand contact to GTP. C262 provides a ligand contact to [4Fe-4S] cluster.

It belongs to the radical SAM superfamily. MoaA family. The cofactor is [4Fe-4S] cluster.

It catalyses the reaction GTP + AH2 + S-adenosyl-L-methionine = (8S)-3',8-cyclo-7,8-dihydroguanosine 5'-triphosphate + 5'-deoxyadenosine + L-methionine + A + H(+). Its pathway is cofactor biosynthesis; molybdopterin biosynthesis. Its function is as follows. Catalyzes the cyclization of GTP to (8S)-3',8-cyclo-7,8-dihydroguanosine 5'-triphosphate. The protein is Probable GTP 3',8-cyclase of Saccharolobus islandicus (strain M.16.27) (Sulfolobus islandicus).